Here is a 467-residue protein sequence, read N- to C-terminus: Glutamate--tRNA ligase (467 aa).

The short motif at 9-19 is the 'HIGH' region element; it reads PSPTGFLHIGG. A 'KMSKS' region motif is present at residues 250-254; it reads KLSKR. Lys253 is a binding site for ATP.

This sequence belongs to the class-I aminoacyl-tRNA synthetase family. Glutamate--tRNA ligase type 1 subfamily. As to quaternary structure, monomer.

Its subcellular location is the cytoplasm. The enzyme catalyses tRNA(Glu) + L-glutamate + ATP = L-glutamyl-tRNA(Glu) + AMP + diphosphate. Functionally, catalyzes the attachment of glutamate to tRNA(Glu) in a two-step reaction: glutamate is first activated by ATP to form Glu-AMP and then transferred to the acceptor end of tRNA(Glu). This chain is Glutamate--tRNA ligase, found in Mesomycoplasma hyopneumoniae (strain 232) (Mycoplasma hyopneumoniae).